The sequence spans 397 residues: pH-sensitive adenylate cyclase MT1302 (397 aa).

The segment at 1–191 is regulatory domain; that stretch reads MTDHVREADD…IQDMLFMQLR (191 aa). The segment at 192-206 is linker; that stretch reads HMMETEAVNAGERAA. The interval 211-397 is catalytic domain; sequence PGARQVTVAF…QDDDLAGSSP (187 aa). Positions 217–325 constitute a Guanylate cyclase domain; sequence TVAFADLVGF…SPVNVASRVT (109 aa). Asp222 is a binding site for Mn(2+). Position 261 (Lys261) interacts with substrate. Asp265 contacts Mn(2+). Arg298 is a binding site for ATP. A substrate-binding site is contributed by Asp312.

Belongs to the adenylyl cyclase class-4/guanylyl cyclase family. In terms of assembly, homodimer. The cofactor is Mn(2+). Mg(2+) serves as cofactor.

It carries out the reaction ATP = 3',5'-cyclic AMP + diphosphate. Catalyzes the formation of the second messenger cAMP. In Mycobacterium tuberculosis (strain CDC 1551 / Oshkosh), this protein is pH-sensitive adenylate cyclase MT1302.